Consider the following 139-residue polypeptide: Large ribosomal subunit protein uL16 (139 aa).

The protein belongs to the universal ribosomal protein uL16 family. As to quaternary structure, part of the 50S ribosomal subunit.

Binds 23S rRNA and is also seen to make contacts with the A and possibly P site tRNAs. This chain is Large ribosomal subunit protein uL16, found in Picosynechococcus sp. (strain ATCC 27264 / PCC 7002 / PR-6) (Agmenellum quadruplicatum).